The chain runs to 308 residues: Peptidyl-prolyl cis-trans isomerase CYP8 (308 aa).

The region spanning 56-215 (FTDPESSEEA…QPITIGYISS (160 aa)) is the PPIase cyclophilin-type domain.

The catalysed reaction is [protein]-peptidylproline (omega=180) = [protein]-peptidylproline (omega=0). Functionally, PPIases accelerate the folding of proteins. It catalyzes the cis-trans isomerization of proline imidic peptide bonds in oligopeptides. The sequence is that of Peptidyl-prolyl cis-trans isomerase CYP8 (CPR8) from Saccharomyces cerevisiae (strain ATCC 204508 / S288c) (Baker's yeast).